The sequence spans 397 residues: Elongation factor Tu (397 aa).

The region spanning 10–207 (LPHVNVGTIG…TLDSYIPDPV (198 aa)) is the tr-type G domain. The tract at residues 19–26 (GHVDHGKT) is G1. GTP is bound at residue 19–26 (GHVDHGKT). Mg(2+) is bound at residue T26. Residues 60-64 (GITIN) form a G2 region. Positions 81 to 84 (DCPG) are G3. GTP contacts are provided by residues 81–85 (DCPGH) and 136–139 (NKAD). Residues 136-139 (NKAD) are G4. Positions 174–176 (SAR) are G5.

The protein belongs to the TRAFAC class translation factor GTPase superfamily. Classic translation factor GTPase family. EF-Tu/EF-1A subfamily. Monomer.

It is found in the cytoplasm. It carries out the reaction GTP + H2O = GDP + phosphate + H(+). GTP hydrolase that promotes the GTP-dependent binding of aminoacyl-tRNA to the A-site of ribosomes during protein biosynthesis. The sequence is that of Elongation factor Tu from Pseudomonas fluorescens (strain SBW25).